We begin with the raw amino-acid sequence, 127 residues long: Large ribosomal subunit protein bL17 (127 aa).

The protein belongs to the bacterial ribosomal protein bL17 family. As to quaternary structure, part of the 50S ribosomal subunit. Contacts protein L32.

This chain is Large ribosomal subunit protein bL17, found in Stenotrophomonas maltophilia (strain K279a).